We begin with the raw amino-acid sequence, 371 residues long: Queuine tRNA-ribosyltransferase (371 aa).

Residue Asp90 is the Proton acceptor of the active site. Substrate contacts are provided by residues 90-94 (DSGGF), Asp144, Gln189, and Gly215. The RNA binding stretch occupies residues 246 to 252 (GVGTPEN). Asp265 serves as the catalytic Nucleophile. The tract at residues 270–274 (TRNAR) is RNA binding; important for wobble base 34 recognition. Zn(2+)-binding residues include Cys303, Cys305, Cys308, and His334.

The protein belongs to the queuine tRNA-ribosyltransferase family. In terms of assembly, homodimer. Within each dimer, one monomer is responsible for RNA recognition and catalysis, while the other monomer binds to the replacement base PreQ1. Zn(2+) is required as a cofactor.

It carries out the reaction 7-aminomethyl-7-carbaguanine + guanosine(34) in tRNA = 7-aminomethyl-7-carbaguanosine(34) in tRNA + guanine. It functions in the pathway tRNA modification; tRNA-queuosine biosynthesis. Its function is as follows. Catalyzes the base-exchange of a guanine (G) residue with the queuine precursor 7-aminomethyl-7-deazaguanine (PreQ1) at position 34 (anticodon wobble position) in tRNAs with GU(N) anticodons (tRNA-Asp, -Asn, -His and -Tyr). Catalysis occurs through a double-displacement mechanism. The nucleophile active site attacks the C1' of nucleotide 34 to detach the guanine base from the RNA, forming a covalent enzyme-RNA intermediate. The proton acceptor active site deprotonates the incoming PreQ1, allowing a nucleophilic attack on the C1' of the ribose to form the product. After dissociation, two additional enzymatic reactions on the tRNA convert PreQ1 to queuine (Q), resulting in the hypermodified nucleoside queuosine (7-(((4,5-cis-dihydroxy-2-cyclopenten-1-yl)amino)methyl)-7-deazaguanosine). The polypeptide is Queuine tRNA-ribosyltransferase (Helicobacter pylori (strain G27)).